The sequence spans 1161 residues: Cell wall protein DAN4 (1161 aa).

Residues 1–19 form the signal peptide; that stretch reads MVNISIVAGIVALATSAAA. 4 disordered regions span residues 123 to 309, 326 to 345, 354 to 547, and 691 to 713; these read TSTS…SASS, TPAT…STTN, TTTS…SSFG, and STDS…SSTA. The segment at 134 to 286 is 46 X 3 AA tandem repeats of T-[SP]-T; the sequence is TSTTPTTTIT…TTSTTSTTST (153 aa). Over residues 354-372 the composition is skewed to low complexity; that stretch reads TTTSDTYISSSSPSQVTSS. A run of 14 repeats spans residues 373–384, 385–396, 397–408, 409–420, 421–432, 433–444, 445–456, 457–468, 469–480, 481–492, 493–504, 505–516, 517–528, and 529–540. Residues 373–540 are 14 X 12 AA approximate tandem repeats; sequence AEPTTVSEVT…PIRSSQVTTT (168 aa). Over residues 373 to 547 the composition is skewed to polar residues; the sequence is AEPTTVSEVT…TTTEPVSSFG (175 aa). 2 repeat units span residues 826–913 and 914–1001. The interval 826–1040 is 2.5 X 88 AA approximate tandem repeats; it reads EDSVLTKTQV…SPVSSFNSKA (215 aa). The 2-3; truncated repeat unit spans residues 1002 to 1040; the sequence is EDVASTKTELLTMETTITSCSGGICTTLMSPVSSFNSKA. N1137 carries the GPI-anchor amidated asparagine lipid modification. Residues 1138 to 1161 constitute a propeptide, removed in mature form; that stretch reads GAYNFDKDNIFGTAIVAVVALLLL.

Belongs to the SRP1/TIP1 family. Post-translationally, extensively O-glycosylated. In terms of processing, the GPI-anchor is attached to the protein in the endoplasmic reticulum and serves to target the protein to the cell surface. There, the glucosamine-inositol phospholipid moiety is cleaved off and the GPI-modified mannoprotein is covalently attached via its lipidless GPI glycan remnant to the 1,6-beta-glucan of the outer cell wall layer.

It is found in the secreted. The protein localises to the cell wall. The protein resides in the cell membrane. Component of the cell wall. In Saccharomyces cerevisiae (strain ATCC 204508 / S288c) (Baker's yeast), this protein is Cell wall protein DAN4.